A 385-amino-acid polypeptide reads, in one-letter code: MPEVIPPDSVGIVTPQVAQFDIPLTLECGKQLNSFQLMYETYGELNADRSNAVLICHALSGHHHAAGYHSMEDSKPGWWDSCIGPGKPIDTNKFFVVSLNNLGGCAGSTGPASINPETGKAYGPDFPVVTVQDWVRSQAMLADRLNIPHWAAVIGGSLGGMQALQWSIEYPERVHNAAVIASTPRLSAQNIAFNEVARKAITSDPNFYEGRYGEHTTYPDKGLMLARMVGHITYLSNASMGEKFGRDLRAQTLKFGLLDVQFEVESYLHYQGERFSKNFDANTYLLMTRALDYFDPARAHEGDLSKALEPAKCKYLVVSFTTDWRFPPDRSEELVNAMVEAKKSVSYAEVDSPHGHDAFLIPTQRYMDVFHGFMGRVAKEIPHAR.

One can recognise an AB hydrolase-1 domain in the interval 51–360; the sequence is NAVLICHALS…DSPHGHDAFL (310 aa). The active-site Nucleophile is Ser-157. Arg-227 provides a ligand contact to substrate. Residues Asp-323 and His-356 contribute to the active site. Asp-357 contacts substrate.

The protein belongs to the AB hydrolase superfamily. MetX family. In terms of assembly, homodimer.

The protein localises to the cytoplasm. The enzyme catalyses L-homoserine + succinyl-CoA = O-succinyl-L-homoserine + CoA. It functions in the pathway amino-acid biosynthesis; L-methionine biosynthesis via de novo pathway; O-succinyl-L-homoserine from L-homoserine: step 1/1. Its function is as follows. Transfers a succinyl group from succinyl-CoA to L-homoserine, forming succinyl-L-homoserine. The polypeptide is Homoserine O-succinyltransferase (Hahella chejuensis (strain KCTC 2396)).